The chain runs to 252 residues: Small ribosomal subunit protein uS3 (252 aa).

Positions 39-109 (IRNYVNTRLK…EVKIDVVEVV (71 aa)) constitute a KH type-2 domain. The span at 222–240 (MKKIRDRRNDQRSRGGRDS) shows a compositional bias: basic and acidic residues. Residues 222–252 (MKKIRDRRNDQRSRGGRDSRNKRRRRPKNTA) are disordered. The segment covering 241 to 252 (RNKRRRRPKNTA) has biased composition (basic residues).

Belongs to the universal ribosomal protein uS3 family. Part of the 30S ribosomal subunit. Forms a tight complex with proteins S10 and S14.

Functionally, binds the lower part of the 30S subunit head. Binds mRNA in the 70S ribosome, positioning it for translation. This Chlorobium phaeobacteroides (strain BS1) protein is Small ribosomal subunit protein uS3.